The following is a 287-amino-acid chain: 4-diphosphocytidyl-2-C-methyl-D-erythritol kinase (287 aa).

Lys22 is a catalytic residue. Pro102–Ser112 is a binding site for ATP. Residue Asp139 is part of the active site.

It belongs to the GHMP kinase family. IspE subfamily.

It catalyses the reaction 4-CDP-2-C-methyl-D-erythritol + ATP = 4-CDP-2-C-methyl-D-erythritol 2-phosphate + ADP + H(+). The protein operates within isoprenoid biosynthesis; isopentenyl diphosphate biosynthesis via DXP pathway; isopentenyl diphosphate from 1-deoxy-D-xylulose 5-phosphate: step 3/6. Its function is as follows. Catalyzes the phosphorylation of the position 2 hydroxy group of 4-diphosphocytidyl-2C-methyl-D-erythritol. In Dinoroseobacter shibae (strain DSM 16493 / NCIMB 14021 / DFL 12), this protein is 4-diphosphocytidyl-2-C-methyl-D-erythritol kinase.